A 389-amino-acid chain; its full sequence is MLSLRVPLAPITDPQQLQLSPLKGLSLVDKENTPPALSGTRVLASKTARRIFQEPTEPKTKAAAPGVEDEPLLRENPRRFVIFPIEYHDIWQMYKKAEASFWTAEEVDLSKDIQHWESLKPEERYFISHVLAFFAASDGIVNENLVERFSQEVQITEARCFYGFQIAMENIHSEMYSLLIDTYIKDPKEREFLFNAIETMPCVKKKADWALRWIGDKEATYGERVVAFAAVEGIFFSGSFASIFWLKKRGLMPGLTFSNELISRDEGLHCDFACLMFKHLVHKPSEERVREIIINAVRIEQEFLTEALPVKLIGMNCTLMKQYIEFVADRLMLELGFSKVFRVENPFDFMENISLEGKTNFFEKRVGEYQRMGVMSSPTENSFTLDADF.

At serine 20 the chain carries Phosphoserine. Threonine 33 carries the post-translational modification Phosphothreonine. The Cy motif lies at 49–51; it reads RRI. Residues aspartate 138, glutamate 169, and histidine 172 each coordinate Fe cation. The active site involves tyrosine 176. The Fe cation site is built by glutamate 232, glutamate 266, and histidine 269.

It belongs to the ribonucleoside diphosphate reductase small chain family. As to quaternary structure, heterodimer of a large and a small subunit. Interacts (via Cy motif and when phosphorylated at Thr-33) with CCNF; the interaction occurs exclusively in G2 and early M. Fe cation serves as cofactor. In terms of processing, phosphorylation on Ser-20 relieves the inhibitory effect on Wnt signaling. Phosphorylated on Thr-33 by CDK1 and CDK2; predominantly in G2 and M phase. Post-translationally, ubiquitinated by the SCF(CCNF) E3 ubiquitin-protein ligase complex; leading to its degradation by the proteasome.

The protein resides in the cytoplasm. It is found in the nucleus. It carries out the reaction a 2'-deoxyribonucleoside 5'-diphosphate + [thioredoxin]-disulfide + H2O = a ribonucleoside 5'-diphosphate + [thioredoxin]-dithiol. Functionally, provides the precursors necessary for DNA synthesis. Catalyzes the biosynthesis of deoxyribonucleotides from the corresponding ribonucleotides. Inhibits Wnt signaling. The sequence is that of Ribonucleoside-diphosphate reductase subunit M2 (RRM2) from Homo sapiens (Human).